A 335-amino-acid polypeptide reads, in one-letter code: Probable nicotianamine synthase 2 (335 aa).

The protein belongs to the nicotianamine synthase (NAS)-like family.

It carries out the reaction 3 S-adenosyl-L-methionine = nicotianamine + 3 S-methyl-5'-thioadenosine + 3 H(+). In terms of biological role, synthesizes nicotianamine, a polyamine that is the first intermediate in the synthesis of the phytosiderophores of the mugineic acid type found in gramineae which serves as a sensor for the physiological iron status within the plant, and/or might be involved in the transport of iron. In Hordeum vulgare (Barley), this protein is Probable nicotianamine synthase 2 (NAS2).